Here is a 180-residue protein sequence, read N- to C-terminus: MNRPESIYDLLLAPLTLSLIFGGIGVVLLTNIIYSALSLGLVLICISFFYIILNADFVAVAQILIYIGAVNILILFAVMLMNNPKYPNYAPPWTVGDSISSIVCTSLFCSLITIILNISWFGISLTQKSDQMLERDLTNNIQRIGAHLSTDFFLPFELISIILLVALIGAITIARREETV.

Helical transmembrane passes span 10-30 (LLLA…VLLT), 32-52 (IIYS…FYII), 57-77 (FVAV…ILFA), 102-122 (IVCT…SWFG), and 153-173 (FLPF…AITI).

The protein belongs to the complex I subunit 6 family. NDH is composed of at least 16 different subunits, 5 of which are encoded in the nucleus.

The protein localises to the plastid. Its subcellular location is the chloroplast thylakoid membrane. It catalyses the reaction a plastoquinone + NADH + (n+1) H(+)(in) = a plastoquinol + NAD(+) + n H(+)(out). It carries out the reaction a plastoquinone + NADPH + (n+1) H(+)(in) = a plastoquinol + NADP(+) + n H(+)(out). In terms of biological role, NDH shuttles electrons from NAD(P)H:plastoquinone, via FMN and iron-sulfur (Fe-S) centers, to quinones in the photosynthetic chain and possibly in a chloroplast respiratory chain. The immediate electron acceptor for the enzyme in this species is believed to be plastoquinone. Couples the redox reaction to proton translocation, and thus conserves the redox energy in a proton gradient. The chain is NAD(P)H-quinone oxidoreductase subunit 6, chloroplastic (ndhG) from Cryptomeria japonica (Japanese cedar).